Reading from the N-terminus, the 105-residue chain is Endogenous retrovirus group K member 6 Rec protein (105 aa).

Residues 1–49 (MNPSEMQRKAPPRRRRHRNRAPLTHKMNKMVTSEEQMKLPSTKKAEPPT) are disordered. Positions 10 to 20 (APPRRRRHRNR) are enriched in basic residues. The Nuclear localization signal motif lies at 13-20 (RRRRHRNR). Residues 50–59 (WAQLKKLTQL) carry the Nuclear export signal motif.

In terms of assembly, forms homodimers, homotrimers, and homotetramers via a C-terminal domain. Associates with XPO1 and with ZNF145. In terms of tissue distribution, expressed at higher level in placenta, expressed at lower level in several organs and cell lines.

Its subcellular location is the cytoplasm. It is found in the nucleus. The protein resides in the nucleolus. In terms of biological role, retroviral replication requires the nuclear export and translation of unspliced, singly-spliced and multiply-spliced derivatives of the initial genomic transcript. Rec interacts with a highly structured RNA element (RcRE) present in the viral 3'LTR and recruits the cellular nuclear export machinery. This permits export to the cytoplasm of unspliced genomic or incompletely spliced subgenomic viral transcripts. The protein is Endogenous retrovirus group K member 6 Rec protein (ERVK-6) of Homo sapiens (Human).